The primary structure comprises 1000 residues: Kinesin-like protein CIN8 (1000 aa).

Positions 1-26 (MPAENQNTGQDRSSNSISKNGNSQVG) are enriched in polar residues. Positions 1–28 (MPAENQNTGQDRSSNSISKNGNSQVGCH) are disordered. In terms of domain architecture, Kinesin motor spans 36 to 477 (NITVAVRCRG…LEYASKAKNI (442 aa)). 128–135 (GMTSTGKT) lines the ATP pocket. The segment covering 220 to 242 (ANNTTSNSASSSRSNSRNSSPRS) has biased composition (low complexity). Disordered regions lie at residues 220–248 (ANNTTSNSASSSRSNSRNSSPRSLNDLTP) and 260–312 (KSLP…PNDQ). Over residues 261 to 276 (SLPNTIKQQYQQQQAV) the composition is skewed to polar residues. The span at 277 to 301 (NSRNNSSSNSGSTTNNASSNTNTNN) shows a compositional bias: low complexity. The segment covering 302-312 (GQRSSMAPNDQ) has biased composition (polar residues). Coiled-coil stretches lie at residues 518 to 615 (MSQD…MALH) and 860 to 904 (ISVM…IKNS). Positions 970–1000 (VISPKKHAIEDENKSSENVDNEGSRKMLKIE) are disordered. S972 carries the phosphoserine modification. The segment covering 976–1000 (HAIEDENKSSENVDNEGSRKMLKIE) has biased composition (basic and acidic residues).

It belongs to the TRAFAC class myosin-kinesin ATPase superfamily. Kinesin family. BimC subfamily.

The protein resides in the cytoplasm. The protein localises to the cytoskeleton. Its subcellular location is the spindle. It is found in the mitochondrion. In terms of biological role, elongates the mitotic spindle by interacting with spindle microtubules to generate an outward force pushing spindle poles apart. Following spindle assembly, CIN8 and KIP1 apparently act to oppose a force, possibly generated by KAR3, that draws separated poles back together. This chain is Kinesin-like protein CIN8 (CIN8), found in Saccharomyces cerevisiae (strain ATCC 204508 / S288c) (Baker's yeast).